A 239-amino-acid polypeptide reads, in one-letter code: Sugar fermentation stimulation protein homolog (239 aa).

It belongs to the SfsA family.

The protein is Sugar fermentation stimulation protein homolog of Sinorhizobium medicae (strain WSM419) (Ensifer medicae).